The chain runs to 829 residues: Leucine--tRNA ligase (829 aa).

The 'HIGH' region signature appears at 40–50; sequence PYPSGNIHMGH. The 'KMSKS' region motif lies at 581–585; sequence KMSKS. ATP is bound at residue Lys-584.

This sequence belongs to the class-I aminoacyl-tRNA synthetase family.

The protein localises to the cytoplasm. The enzyme catalyses tRNA(Leu) + L-leucine + ATP = L-leucyl-tRNA(Leu) + AMP + diphosphate. This is Leucine--tRNA ligase from Oleidesulfovibrio alaskensis (strain ATCC BAA-1058 / DSM 17464 / G20) (Desulfovibrio alaskensis).